The following is a 429-amino-acid chain: MTAITNIAAREILDSRGNPTVEVDVLLEDGSFGRAAVPSGASTGAHEAVELRDGDKGRYNGKGVLKAVDAVQTEILDAIGGMDAEDQVAVDEAMITLDGTPNKARLGANAILGVSLAVAKAAAETAGLPLYRYVGGVQGRVLPVPMMNIVNGGAHADNPIDFQEFMVMPVGATSLSDAVRMGAEIFHTLKSALKKAGHNTNVGDEGGFAPNLPSAEAALDFVMESINAAGFKPGSDVVLALDCAATEFFKDGAYHYEGEGQTRSIEQQVEYLAKLTEAYPILSIEDGMSEDDWEGWKLLTDRIGNRVQLVGDDLFVTNVERLARGIETGTGNSILVKVNQIGSLTETLAAVDMAQRAGYTAVMSHRSGETEDSTIADLAVATNCGQIKTGSLARSDRLAKYNQLIRIEEGLGAQALYAGRSAIRQLAGR.

Gln-163 contacts (2R)-2-phosphoglycerate. Glu-205 acts as the Proton donor in catalysis. Mg(2+) contacts are provided by Asp-242, Glu-285, and Asp-312. (2R)-2-phosphoglycerate-binding residues include Lys-337, Arg-366, Ser-367, and Lys-388. Lys-337 acts as the Proton acceptor in catalysis.

The protein belongs to the enolase family. Mg(2+) is required as a cofactor.

It localises to the cytoplasm. The protein localises to the secreted. It is found in the cell surface. It carries out the reaction (2R)-2-phosphoglycerate = phosphoenolpyruvate + H2O. The protein operates within carbohydrate degradation; glycolysis; pyruvate from D-glyceraldehyde 3-phosphate: step 4/5. Functionally, catalyzes the reversible conversion of 2-phosphoglycerate (2-PG) into phosphoenolpyruvate (PEP). It is essential for the degradation of carbohydrates via glycolysis. The chain is Enolase from Methylorubrum populi (strain ATCC BAA-705 / NCIMB 13946 / BJ001) (Methylobacterium populi).